Reading from the N-terminus, the 216-residue chain is Regulatory protein RecX (216 aa).

This sequence belongs to the RecX family.

It is found in the cytoplasm. Functionally, modulates RecA activity. This chain is Regulatory protein RecX, found in Clostridium tetani (strain Massachusetts / E88).